The chain runs to 320 residues: ATP-dependent 6-phosphofructokinase (320 aa).

Gly12 lines the ATP pocket. Residues Arg22–Arg26 and Arg55–Asp60 contribute to the ADP site. ATP contacts are provided by residues Arg73–Phe74 and Gly103–Ser106. Asp104 serves as a coordination point for Mg(2+). Thr126 to Asp128 contacts substrate. The active-site Proton acceptor is the Asp128. Arg155 contributes to the ADP binding site. Residues Arg163 and Met170 to Arg172 contribute to the substrate site. ADP-binding positions include Gly186–Glu188, Lys212, and Lys214–His216. Substrate-binding positions include Glu223, Arg244, and His250 to Arg253.

The protein belongs to the phosphofructokinase type A (PFKA) family. ATP-dependent PFK group I subfamily. Prokaryotic clade 'B1' sub-subfamily. In terms of assembly, homotetramer. The cofactor is Mg(2+).

It is found in the cytoplasm. It catalyses the reaction beta-D-fructose 6-phosphate + ATP = beta-D-fructose 1,6-bisphosphate + ADP + H(+). The protein operates within carbohydrate degradation; glycolysis; D-glyceraldehyde 3-phosphate and glycerone phosphate from D-glucose: step 3/4. Its activity is regulated as follows. Allosterically activated by ADP and other diphosphonucleosides, and allosterically inhibited by phosphoenolpyruvate. Its function is as follows. Catalyzes the phosphorylation of D-fructose 6-phosphate to fructose 1,6-bisphosphate by ATP, the first committing step of glycolysis. The polypeptide is ATP-dependent 6-phosphofructokinase (Cronobacter sakazakii (strain ATCC BAA-894) (Enterobacter sakazakii)).